A 507-amino-acid chain; its full sequence is Sugar transport protein 6 (507 aa).

Topologically, residues 1 to 20 (MAVVVSNANAPAFEAKMTVY) are cytoplasmic. 12 helical membrane-spanning segments follow: residues 21-41 (VFIC…DIGI), 78-98 (FLQL…FVAS), 115-135 (IFFL…MLII), 138-158 (LFLG…LSEI), 165-185 (GGLN…ANIV), 199-219 (IALG…LLII), 280-300 (FIIG…AIMF), 318-338 (LSAV…IYLV), 345-365 (FLLL…GIIL), 381-401 (LVVV…WGPL), 418-438 (GFAV…QAFL), and 447-467 (GIFF…FFFI). The Cytoplasmic segment spans residues 468 to 507 (PETKGIAIDDMRESVWKPHWFWKRYMLPEDDHHDIEKRNA).

This sequence belongs to the major facilitator superfamily. Sugar transporter (TC 2.A.1.1) family. In terms of tissue distribution, pollen specific.

It localises to the membrane. Inhibited by uncouplers such as 2,4-dinitrophenol and carbonyl cyanide-m-chlorophenyl-hydrazone. In terms of biological role, mediates an active uptake of hexoses, probably by sugar/hydrogen symport. Can transport glucose, 3-O-methylglucose, mannose, fructose and galactose, and, to a lower extent, xylose and ribulose. This chain is Sugar transport protein 6 (STP6), found in Arabidopsis thaliana (Mouse-ear cress).